The chain runs to 389 residues: Exodeoxyribonuclease 7 large subunit (389 aa).

The protein belongs to the XseA family. As to quaternary structure, heterooligomer composed of large and small subunits.

Its subcellular location is the cytoplasm. It catalyses the reaction Exonucleolytic cleavage in either 5'- to 3'- or 3'- to 5'-direction to yield nucleoside 5'-phosphates.. Bidirectionally degrades single-stranded DNA into large acid-insoluble oligonucleotides, which are then degraded further into small acid-soluble oligonucleotides. The chain is Exodeoxyribonuclease 7 large subunit from Pseudothermotoga lettingae (strain ATCC BAA-301 / DSM 14385 / NBRC 107922 / TMO) (Thermotoga lettingae).